Reading from the N-terminus, the 92-residue chain is N(2)-fixation sustaining protein CowN (92 aa).

Belongs to the CowN family.

Functionally, is required to sustain N(2)-dependent growth in the presence of low levels of carbon monoxide (CO). Probably acts by protecting the N(2) fixation ability of the nitrogenase complex, which is inactivated in the presence of CO. This chain is N(2)-fixation sustaining protein CowN, found in Rhodopseudomonas palustris (strain BisB18).